We begin with the raw amino-acid sequence, 527 residues long: L-amino-acid oxidase (527 aa).

The first 27 residues, 1-27, serve as a signal peptide directing secretion; it reads MDLHRAPWKSSAAAAVLLLALFSGAAA. Cys-37 and Cys-200 are disulfide-bonded. Asn-58 carries N-linked (GlcNAc...) asparagine glycosylation. Residues 70 to 71, 90 to 91, Arg-98, 114 to 117, and Val-288 contribute to the FAD site; these read VA, EA, and GAMR. A substrate-binding site is contributed by Arg-117. Asn-393 is a glycosylation site (N-linked (GlcNAc...) asparagine). A substrate-binding site is contributed by Tyr-403. FAD contacts are provided by residues Glu-485 and 492 to 497; that span reads AWMESA. Residue 492-493 participates in substrate binding; sequence AW.

In terms of assembly, homodimer. FAD serves as cofactor. In terms of tissue distribution, expression mainly observed in plasma, spleen, kidney and gills with low levels detected in blood and no expression detected in brain, liver, heart, muscle or intestine (at protein level).

It is found in the secreted. It carries out the reaction an L-alpha-amino acid + O2 + H2O = a 2-oxocarboxylate + H2O2 + NH4(+). Inhibits the growth of both Gram-negative and Gram-positive bacteria. Displays strong antibacterial activity towards V.cholerae and E.tarda. Causes deformation of the surface of S.aureus and the formation of pores on the surface of E.coli. Strong antiparasitic activity is seen towards C.irritans, T.brucei and I.multifiliis. Cilia of treated theronts are lost and the macronucleus swells, inducing cell membrane rupture and efflux of the cytoplasm. This Siganus canaliculatus (White-spotted spinefoot) protein is L-amino-acid oxidase.